A 262-amino-acid chain; its full sequence is Caffeyl-CoA reductase-Etf complex subunit CarD (262 aa).

The protein belongs to the ETF beta-subunit/FixA family. In terms of assembly, part of the homotrimeric caffeyl-CoA reductase-Etf complex composed of (R)-2-hydroxyisocaproyl-CoA dehydratase CarC, and the electron transfer flavoprotein (ETF) alpha (CarE) and beta (CarD) subunits. The cofactor is FAD. AMP serves as cofactor.

It is found in the cytoplasm. It carries out the reaction hydrocaffeoyl-CoA + 2 reduced [2Fe-2S]-[ferredoxin] + 2 NAD(+) = (E)-caffeoyl-CoA + 2 oxidized [2Fe-2S]-[ferredoxin] + 2 NADH. Functionally, caffeyl-CoA reductase-Etf complex catalyzes the reduction of caffeyl-CoA to yield hydrocaffeyl-CoA. It couples the endergonic ferredoxin reduction with NADH as reductant to the exergonic reduction of caffeoyl-CoA with the same reductant. It uses the mechanism of electron bifurcation to overcome the steep energy barrier in ferredoxin reduction. The electron transfer flavoprotein (Etf) mediates the electron transfer between the different donors and acceptors. The complex can also reduce 4-coumaroyl-CoA and feruloyl-CoA. This chain is Caffeyl-CoA reductase-Etf complex subunit CarD, found in Acetobacterium woodii (strain ATCC 29683 / DSM 1030 / JCM 2381 / KCTC 1655 / WB1).